The sequence spans 85 residues: UPF0386 protein Plav_1374 (85 aa).

This sequence belongs to the UPF0386 family.

The protein is UPF0386 protein Plav_1374 of Parvibaculum lavamentivorans (strain DS-1 / DSM 13023 / NCIMB 13966).